The sequence spans 972 residues: Aminopeptidase N (972 aa).

Over 2–17 (TSQGRTRTLLNLTPIR) the chain is Cytoplasmic. The helical; Signal-anchor for type II membrane protein transmembrane segment at 18-39 (LIVALFLVAAAVGLSIGLTYYF) threads the bilayer. The Extracellular segment spans residues 40-972 (TRKAFDTSEK…LAAFFKKATL (933 aa)). The span at 47–62 (SEKPGKDDTGGKDKDN) shows a compositional bias: basic and acidic residues. Positions 47–66 (SEKPGKDDTGGKDKDNSPSA) are disordered. An N-linked (GlcNAc...) asparagine glycan is attached at Asn99. Residue Glu208 participates in substrate binding. The N-linked (GlcNAc...) asparagine glycan is linked to Asn227. Substrate is bound at residue 343 to 347 (GAMEN). His379 provides a ligand contact to Zn(2+). The Proton acceptor role is filled by Glu380. Residues His383 and Glu402 each contribute to the Zn(2+) site. A glycan (N-linked (GlcNAc...) asparagine) is linked at Asn549. Intrachain disulfides connect Cys759-Cys766 and Cys804-Cys840. Residue Asn858 is glycosylated (N-linked (GlcNAc...) asparagine).

This sequence belongs to the peptidase M1 family. Zn(2+) serves as cofactor.

The protein localises to the membrane. It catalyses the reaction Release of an N-terminal amino acid, Xaa-|-Yaa- from a peptide, amide or arylamide. Xaa is preferably Ala, but may be most amino acids including Pro (slow action). When a terminal hydrophobic residue is followed by a prolyl residue, the two may be released as an intact Xaa-Pro dipeptide.. The chain is Aminopeptidase N from Haemonchus contortus (Barber pole worm).